A 325-amino-acid polypeptide reads, in one-letter code: Replication factor C small subunit (325 aa).

54–61 serves as a coordination point for ATP; that stretch reads GPAGTGKT.

This sequence belongs to the activator 1 small subunits family. RfcS subfamily. As to quaternary structure, heteromultimer composed of small subunits (RfcS) and large subunits (RfcL).

Part of the RFC clamp loader complex which loads the PCNA sliding clamp onto DNA. The polypeptide is Replication factor C small subunit (Haloarcula marismortui (strain ATCC 43049 / DSM 3752 / JCM 8966 / VKM B-1809) (Halobacterium marismortui)).